The following is a 688-amino-acid chain: Elongation factor G (688 aa).

A tr-type G domain is found at 8 to 282; it reads EKTRNIGIMA…AIIDYLPSPM (275 aa). Residues 17–24, 81–85, and 135–138 contribute to the GTP site; these read AHIDAGKT, DTPGH, and NKMD.

The protein belongs to the TRAFAC class translation factor GTPase superfamily. Classic translation factor GTPase family. EF-G/EF-2 subfamily.

The protein resides in the cytoplasm. Functionally, catalyzes the GTP-dependent ribosomal translocation step during translation elongation. During this step, the ribosome changes from the pre-translocational (PRE) to the post-translocational (POST) state as the newly formed A-site-bound peptidyl-tRNA and P-site-bound deacylated tRNA move to the P and E sites, respectively. Catalyzes the coordinated movement of the two tRNA molecules, the mRNA and conformational changes in the ribosome. This Phytoplasma mali (strain AT) protein is Elongation factor G.